We begin with the raw amino-acid sequence, 420 residues long: Transcription factor TCP4 (420 aa).

The tract at residues 1–27 is disordered; that stretch reads MSDDQFHHPPPPSSMRHRSTSDAADGG. A TCP domain is found at 45 to 103; that stretch reads RKDRHSKVCTAKGPRDRRVRLSAHTAIQFYDVQDRLGFDRPSKAVDWLIKKAKTSIDEL. Disordered stretches follow at residues 121-176, 228-256, 353-379, and 399-420; these read NAKP…PSMD, LSLQ…ASEP, HQSI…IPGI, and QEEE…ISRH. Over residues 410 to 420 the composition is skewed to polar residues; it reads KPSSASSISRH.

As to quaternary structure, interacts with AHL27 and AHL29. Interacts with SPL. Interacts with JGB. Interacts with GI (via N-terminus). In terms of tissue distribution, expressed in cotyledons, particularly in the vascular region, in leaves, roots, buds, flowers and immature siliques.

Its subcellular location is the nucleus. In terms of biological role, transcription factor playing a pivotal role in the control of morphogenesis of shoot organs by negatively regulating the expression of boundary-specific genes such as CUC genes, probably through the induction of miRNA (e.g. miR164). Required during early steps of embryogenesis. Participates in ovule development. Activates LOX2 expression by binding to the 5'-GGACCA-3' motif found in its promoter. Activates YUC5 transcription by binding to the 5'-GTGGGCCA-3' motif found in its promoter. Through the activation of YUC5 transcription, integrates the auxin response to a brassinosteroid-dependent molecular circuit that promotes cell elongation in hypocotyls. Activates GIS transcription by binding to the 5'-TGGTCC-3' motif found in its promoter. Involved in the regulation of trichome branching through the activation of GIS transcription. Activates CO transcription by binding to the 5'-GGACCAC-3' motif found in its promoter. Involved in the regulation of photoperiodic flowering through the activation of CO transcription. Activates TCL1 and TCL2 transcription by binding to the 5'-TGGCCA-3' and 5'-GTGGACCA-3' motifS found in their respective promoters. Involved in the suppression of trichome initiaition through the activation of TCL1 and TCL2 transcription. Activates HAT2 transcription by binding to the 5'-TGGTCCAC-3' motif found in its promoter. Through the activation of HAT2 transcription, involved in the auxin-independent reprogramming of mitotic cells to exit division and acquire differentiation competence within the transition zone. This chain is Transcription factor TCP4 (TCP4), found in Arabidopsis thaliana (Mouse-ear cress).